A 191-amino-acid polypeptide reads, in one-letter code: Large ribosomal subunit protein uL5 (191 aa).

The protein belongs to the universal ribosomal protein uL5 family. In terms of assembly, part of the 50S ribosomal subunit; part of the 5S rRNA/L5/L18/L25 subcomplex. Contacts the 5S rRNA and the P site tRNA. Forms a bridge to the 30S subunit in the 70S ribosome.

In terms of biological role, this is one of the proteins that bind and probably mediate the attachment of the 5S RNA into the large ribosomal subunit, where it forms part of the central protuberance. In the 70S ribosome it contacts protein S13 of the 30S subunit (bridge B1b), connecting the 2 subunits; this bridge is implicated in subunit movement. Contacts the P site tRNA; the 5S rRNA and some of its associated proteins might help stabilize positioning of ribosome-bound tRNAs. The sequence is that of Large ribosomal subunit protein uL5 from Salinibacter ruber (strain DSM 13855 / M31).